We begin with the raw amino-acid sequence, 338 residues long: Aspartate carbamoyltransferase catalytic subunit (338 aa).

Residues Arg-72 and Thr-73 each coordinate carbamoyl phosphate. Lys-100 provides a ligand contact to L-aspartate. Residues Arg-122, His-152, and Gln-155 each coordinate carbamoyl phosphate. Residues Arg-186 and Arg-243 each coordinate L-aspartate. Carbamoyl phosphate is bound by residues Gly-284 and Pro-285.

It belongs to the aspartate/ornithine carbamoyltransferase superfamily. ATCase family. In terms of assembly, heterododecamer (2C3:3R2) of six catalytic PyrB chains organized as two trimers (C3), and six regulatory PyrI chains organized as three dimers (R2).

It carries out the reaction carbamoyl phosphate + L-aspartate = N-carbamoyl-L-aspartate + phosphate + H(+). Its pathway is pyrimidine metabolism; UMP biosynthesis via de novo pathway; (S)-dihydroorotate from bicarbonate: step 2/3. In terms of biological role, catalyzes the condensation of carbamoyl phosphate and aspartate to form carbamoyl aspartate and inorganic phosphate, the committed step in the de novo pyrimidine nucleotide biosynthesis pathway. The polypeptide is Aspartate carbamoyltransferase catalytic subunit (Acinetobacter baumannii (strain ACICU)).